The following is a 131-amino-acid chain: Histone H2B.2 (131 aa).

The span at 1 to 19 (MSAKAEKKPASKAPAEKKP) shows a compositional bias: basic and acidic residues. The interval 1–38 (MSAKAEKKPASKAPAEKKPAAKKTAPSSDGKKRTKARK) is disordered. An N6-acetyllysine; alternate mark is found at Lys7 and Lys8. Glycyl lysine isopeptide (Lys-Gly) (interchain with G-Cter in SUMO); alternate cross-links involve residues Lys7 and Lys8. At Ser11 the chain carries Phosphoserine. Lys12 is subject to N6-acetyllysine. An N6-acetyllysine; alternate modification is found at Lys17. Residue Lys17 forms a Glycyl lysine isopeptide (Lys-Gly) (interchain with G-Cter in SUMO); alternate linkage. A Glycyl lysine isopeptide (Lys-Gly) (interchain with G-Cter in SUMO) cross-link involves residue Lys18. Residue Lys124 forms a Glycyl lysine isopeptide (Lys-Gly) (interchain with G-Cter in ubiquitin) linkage.

This sequence belongs to the histone H2B family. As to quaternary structure, the nucleosome is a histone octamer containing two molecules each of H2A, H2B, H3 and H4 assembled in one H3-H4 heterotetramer and two H2A-H2B heterodimers. The octamer wraps approximately 147 bp of DNA. In terms of processing, monoubiquitinated by the UBC2-BRE1 complex to form H2BK123ub1. H2BK123ub1 gives a specific tag for epigenetic transcriptional activation and is also prerequisite for H3K4me and H3K79me formation. H2BK123ub1 also modulates the formation of double-strand breaks during meiosis and is a prerequisite for DNA-damage checkpoint activation. Phosphorylated by STE20 to form H2BS10ph during progression through meiotic prophase. May be correlated with chromosome condensation. Post-translationally, acetylated by GCN5 to form H2BK11ac and H2BK16ac. H2BK16ac can also be formed by ESA1. Acetylation of N-terminal lysines and particularly formation of H2BK11acK16ac has a positive effect on transcription. In terms of processing, sumoylation to form H2BK6su or H2BK7su, and probably also H2BK16su or H2BK17su, occurs preferentially near the telomeres and represses gene transcription.

It localises to the nucleus. It is found in the chromosome. Functionally, core component of nucleosome. Nucleosomes wrap and compact DNA into chromatin, limiting DNA accessibility to the cellular machineries which require DNA as a template. Histones thereby play a central role in transcription regulation, DNA repair, DNA replication and chromosomal stability. DNA accessibility is regulated via a complex set of post-translational modifications of histones, also called histone code, and nucleosome remodeling. In Candida glabrata (strain ATCC 2001 / BCRC 20586 / JCM 3761 / NBRC 0622 / NRRL Y-65 / CBS 138) (Yeast), this protein is Histone H2B.2 (HTB2).